The following is a 366-amino-acid chain: Ribosomal RNA large subunit methyltransferase M (366 aa).

Residues S188, 221 to 224, D240, D260, and D277 each bind S-adenosyl-L-methionine; that span reads CPGG. The active-site Proton acceptor is the K306.

This sequence belongs to the class I-like SAM-binding methyltransferase superfamily. RNA methyltransferase RlmE family. RlmM subfamily. In terms of assembly, monomer.

It localises to the cytoplasm. The enzyme catalyses cytidine(2498) in 23S rRNA + S-adenosyl-L-methionine = 2'-O-methylcytidine(2498) in 23S rRNA + S-adenosyl-L-homocysteine + H(+). In terms of biological role, catalyzes the 2'-O-methylation at nucleotide C2498 in 23S rRNA. The chain is Ribosomal RNA large subunit methyltransferase M from Escherichia coli O45:K1 (strain S88 / ExPEC).